Here is a 299-residue protein sequence, read N- to C-terminus: Delta-9 desaturase-like 2 protein (299 aa).

Residues 55–75 (WEAFRFGIILAILTNLCITFS) traverse the membrane as a helical segment. Residues 77 to 82 (HRNLTH) carry the Histidine box-1 motif. The short motif at 114 to 118 (HRFHH) is the Histidine box-2 element. The helical transmembrane segment at 174-194 (LVLHILAFWTLIYLWGGLPYL) threads the bilayer. Residues 246 to 250 (HNNHH) carry the Histidine box-3 motif. The chain crosses the membrane as a helical span at residues 262-282 (WYQLDITWYLIWFFQALGLAT).

The protein belongs to the fatty acid desaturase type 1 family. Fe cation serves as cofactor.

The protein localises to the endoplasmic reticulum membrane. The protein operates within lipid metabolism; polyunsaturated fatty acid biosynthesis. The sequence is that of Delta-9 desaturase-like 2 protein from Arabidopsis thaliana (Mouse-ear cress).